The primary structure comprises 829 residues: DNA ligase (829 aa).

Residues 1-23 (MPAQTSRARPVEEMTAAQAREAH) form a disordered region. Residues 47-51 (DAEYD), 96-97 (SL), and Glu-130 each bind NAD(+). Lys-132 acts as the N6-AMP-lysine intermediate in catalysis. Arg-153, Glu-190, Lys-306, and Lys-330 together coordinate NAD(+). The Zn(2+) site is built by Cys-453, Cys-456, Cys-477, and Cys-483. Residues 750–829 (AAAAVFSGQT…AEWLAMVEAA (80 aa)) form the BRCT domain.

It belongs to the NAD-dependent DNA ligase family. LigA subfamily. Requires Mg(2+) as cofactor. Mn(2+) is required as a cofactor.

The enzyme catalyses NAD(+) + (deoxyribonucleotide)n-3'-hydroxyl + 5'-phospho-(deoxyribonucleotide)m = (deoxyribonucleotide)n+m + AMP + beta-nicotinamide D-nucleotide.. In terms of biological role, DNA ligase that catalyzes the formation of phosphodiester linkages between 5'-phosphoryl and 3'-hydroxyl groups in double-stranded DNA using NAD as a coenzyme and as the energy source for the reaction. It is essential for DNA replication and repair of damaged DNA. In Methylobacterium nodulans (strain LMG 21967 / CNCM I-2342 / ORS 2060), this protein is DNA ligase.